The primary structure comprises 423 residues: Serine hydroxymethyltransferase (423 aa).

Residues Leu-120 and 124-126 (GHL) each bind (6S)-5,6,7,8-tetrahydrofolate. Lys-229 is modified (N6-(pyridoxal phosphate)lysine). 353 to 355 (SPF) is a binding site for (6S)-5,6,7,8-tetrahydrofolate.

Belongs to the SHMT family. In terms of assembly, homodimer. Pyridoxal 5'-phosphate serves as cofactor.

It is found in the cytoplasm. It carries out the reaction (6R)-5,10-methylene-5,6,7,8-tetrahydrofolate + glycine + H2O = (6S)-5,6,7,8-tetrahydrofolate + L-serine. It participates in one-carbon metabolism; tetrahydrofolate interconversion. It functions in the pathway amino-acid biosynthesis; glycine biosynthesis; glycine from L-serine: step 1/1. In terms of biological role, catalyzes the reversible interconversion of serine and glycine with tetrahydrofolate (THF) serving as the one-carbon carrier. This reaction serves as the major source of one-carbon groups required for the biosynthesis of purines, thymidylate, methionine, and other important biomolecules. Also exhibits THF-independent aldolase activity toward beta-hydroxyamino acids, producing glycine and aldehydes, via a retro-aldol mechanism. This chain is Serine hydroxymethyltransferase, found in Prochlorococcus marinus (strain MIT 9515).